The following is a 451-amino-acid chain: Protease RseP (451 aa).

Position 22 (histidine 22) interacts with Zn(2+). The active site involves glutamate 23. Histidine 26 is a binding site for Zn(2+). The helical transmembrane segment at 98 to 120 (AAIVSAGPIANFLFAIVAYWLVF) threads the bilayer. PDZ domains follow at residues 115–186 (AYWL…APFG) and 199–280 (QWQF…ERES). Helical transmembrane passes span 377-399 (LVYY…LFPL) and 427-446 (FSYR…ALFN).

The protein belongs to the peptidase M50B family. Interacts with RseA. Zn(2+) serves as cofactor.

It localises to the cell inner membrane. A site-2 regulated intramembrane protease (S2P) that cleaves the peptide bond between 'Ala-108' and 'Cys-109' in the transmembrane region of RseA. Part of a regulated intramembrane proteolysis (RIP) cascade. Acts on DegS-cleaved RseA to release the cytoplasmic domain of RseA. This provides the cell with sigma-E (RpoE) activity through the proteolysis of RseA. The protein is Protease RseP (rseP) of Yersinia pestis.